The sequence spans 198 residues: Pyridoxal 5'-phosphate synthase subunit PdxT (198 aa).

Residue 52–54 (GES) coordinates L-glutamine. The Nucleophile role is filled by C84. L-glutamine contacts are provided by residues R115 and 142–143 (IR). Catalysis depends on charge relay system residues H178 and E180.

This sequence belongs to the glutaminase PdxT/SNO family. In the presence of PdxS, forms a dodecamer of heterodimers. Only shows activity in the heterodimer.

The enzyme catalyses aldehydo-D-ribose 5-phosphate + D-glyceraldehyde 3-phosphate + L-glutamine = pyridoxal 5'-phosphate + L-glutamate + phosphate + 3 H2O + H(+). It carries out the reaction L-glutamine + H2O = L-glutamate + NH4(+). The protein operates within cofactor biosynthesis; pyridoxal 5'-phosphate biosynthesis. Functionally, catalyzes the hydrolysis of glutamine to glutamate and ammonia as part of the biosynthesis of pyridoxal 5'-phosphate. The resulting ammonia molecule is channeled to the active site of PdxS. This Archaeoglobus fulgidus (strain ATCC 49558 / DSM 4304 / JCM 9628 / NBRC 100126 / VC-16) protein is Pyridoxal 5'-phosphate synthase subunit PdxT.